We begin with the raw amino-acid sequence, 343 residues long: Aspartate carbamoyltransferase catalytic subunit (343 aa).

Carbamoyl phosphate-binding residues include Arg-91 and Thr-92. Lys-119 contributes to the L-aspartate binding site. Carbamoyl phosphate contacts are provided by Arg-141, His-171, and Gln-174. L-aspartate contacts are provided by Arg-204 and Arg-259. 2 residues coordinate carbamoyl phosphate: Gly-300 and Pro-301.

Belongs to the aspartate/ornithine carbamoyltransferase superfamily. ATCase family. In terms of assembly, heterododecamer (2C3:3R2) of six catalytic PyrB chains organized as two trimers (C3), and six regulatory PyrI chains organized as three dimers (R2).

It carries out the reaction carbamoyl phosphate + L-aspartate = N-carbamoyl-L-aspartate + phosphate + H(+). It functions in the pathway pyrimidine metabolism; UMP biosynthesis via de novo pathway; (S)-dihydroorotate from bicarbonate: step 2/3. Functionally, catalyzes the condensation of carbamoyl phosphate and aspartate to form carbamoyl aspartate and inorganic phosphate, the committed step in the de novo pyrimidine nucleotide biosynthesis pathway. In Burkholderia multivorans (strain ATCC 17616 / 249), this protein is Aspartate carbamoyltransferase catalytic subunit.